The primary structure comprises 437 residues: Inactive peptidyl-prolyl cis-trans isomerase shutdown (437 aa).

Residues 92-178 (DSEVTIHYAA…RPEPALFVIV (87 aa)) form the PPIase FKBP-type domain. 3 TPR repeats span residues 209-242 (VNAL…LRLS), 258-294 (VNAY…EKHC), and 295-327 (KALY…EPKN).

It belongs to the FKBP6 family. In terms of assembly, interacts with Hsp83.

Its subcellular location is the cytoplasm. Functionally, co-chaperone required during oogenesis to repress transposable elements and prevent their mobilization, which is essential for the germline integrity. Acts via the piRNA metabolic process, which mediates the repression of transposable elements during meiosis by forming complexes composed of piRNAs and Piwi proteins and govern the methylation and subsequent repression of transposons. Acts as a co-chaperone via its interaction with Hsp83/HSP90 and is required for the biogenesis of all three piRNA major populations. The chain is Inactive peptidyl-prolyl cis-trans isomerase shutdown (shu) from Bombyx mori (Silk moth).